The following is a 364-amino-acid chain: GTPase Obg (364 aa).

One can recognise an Obg domain in the interval 1–159 (MKFIDEARIE…RNLRLELKVL (159 aa)). Residues 128-147 (IHFKSSTNRAPRQKTDGKAG) form a disordered region. Positions 160 to 334 (ADVGLLGMPN…LVHAIQEYLD (175 aa)) constitute an OBG-type G domain. GTP is bound by residues 166 to 173 (GMPNAGKS), 191 to 195 (FTTLH), 213 to 216 (DIPG), 284 to 287 (NKLD), and 315 to 317 (SAL). Ser173 and Thr193 together coordinate Mg(2+). Positions 340-364 (EDAAAAAPDQRLDPTLHNVDHDDQA) are disordered. Over residues 349–364 (QRLDPTLHNVDHDDQA) the composition is skewed to basic and acidic residues.

Belongs to the TRAFAC class OBG-HflX-like GTPase superfamily. OBG GTPase family. In terms of assembly, monomer. Mg(2+) serves as cofactor.

Its subcellular location is the cytoplasm. Functionally, an essential GTPase which binds GTP, GDP and possibly (p)ppGpp with moderate affinity, with high nucleotide exchange rates and a fairly low GTP hydrolysis rate. Plays a role in control of the cell cycle, stress response, ribosome biogenesis and in those bacteria that undergo differentiation, in morphogenesis control. The protein is GTPase Obg of Ralstonia pickettii (strain 12J).